The primary structure comprises 311 residues: Probable manganese-dependent inorganic pyrophosphatase (311 aa).

The Mn(2+) site is built by H9, D13, D15, D77, H99, and D151.

The protein belongs to the PPase class C family. Requires Mn(2+) as cofactor.

The protein localises to the cytoplasm. It carries out the reaction diphosphate + H2O = 2 phosphate + H(+). The sequence is that of Probable manganese-dependent inorganic pyrophosphatase from Streptococcus equi subsp. zooepidemicus (strain H70).